Here is a 179-residue protein sequence, read N- to C-terminus: MKEAKCERQIHEGKIPNEMGHSIVRAQTQKTGEFLSMVVNTVNDYLNQTTLESLQAELPIEKGYCCDVLSTLRRMAVFCEGGAEACRRLLMQEPFQEARAEKTLYNVYHQCIEEFFMPKKDTWCENSRASYTGVSAIEFYHAVPASLEQLLLPLSAAFLKMREELAHYEASGSSMAPIR.

This is an uncharacterized protein from Bacillus subtilis (strain 168).